We begin with the raw amino-acid sequence, 309 residues long: Probable 2,4-dienoyl-CoA reductase decr-1.2 [(3E)-enoyl-CoA-producing] (309 aa).

Residues 28 to 60, 32 to 37, R57, and D83 contribute to the NADP(+) site; these read VLVTGGGTGIGKAIATTFAHLRATVVIAARRME and GGGTGI. A substrate-binding site is contributed by R57. Residues F116 and S124 each coordinate substrate. The Proton acceptor role is filled by Y166. NADP(+) is bound by residues K181 and 207–210; that span reads PGPI. Substrate is bound at residue R218.

This sequence belongs to the short-chain dehydrogenases/reductases (SDR) family. 2,4-dienoyl-CoA reductase subfamily.

The enzyme catalyses a (2E,4E)-dienoyl-CoA + NADPH + H(+) = a 4,5-saturated-(3E)-enoyl-CoA + NADP(+). It catalyses the reaction a (2E,4Z)-dienoyl-CoA + NADPH + H(+) = a 4,5-saturated-(3E)-enoyl-CoA + NADP(+). In terms of biological role, auxiliary enzyme of beta-oxidation. It participates in the metabolism of unsaturated fatty enoyl-CoA esters having double bonds in both even- and odd-numbered positions. Catalyzes the NADP-dependent reduction of 2,4-dienoyl-CoA to yield trans-3-enoyl-CoA. In Caenorhabditis elegans, this protein is Probable 2,4-dienoyl-CoA reductase decr-1.2 [(3E)-enoyl-CoA-producing].